The primary structure comprises 99 residues: UPF0751 protein BCE_A0020 (99 aa).

The protein belongs to the UPF0751 family.

The chain is UPF0751 protein BCE_A0020 from Bacillus cereus (strain ATCC 10987 / NRS 248).